Reading from the N-terminus, the 224-residue chain is Abasic site processing protein YoqW (224 aa).

The active-site Nucleophile is Cys2. Cys2 bears the Thiazolidine linkage to a ring-opened DNA abasic site mark. Glu106 is a catalytic residue.

It belongs to the SOS response-associated peptidase family.

With respect to regulation, formation and reversal of DNA-protein cross-link depends on DNA context. Catalyzes formation of the thiazolidine linkage in presence of abasic sites in single-stranded DNA. Mediates the reversal of the thiazolidine cross-link in presence of double stranded DNA. Functionally, sensor of abasic sites in single-stranded DNA (ssDNA) required to preserve genome integrity by promoting error-free repair of abasic sites. Recognizes and binds abasic sites in ssDNA at replication forks and chemically modifies the lesion by forming a covalent cross-link with DNA: forms a stable thiazolidine linkage between a ring-opened abasic site and the alpha-amino and sulfhydryl substituents of its N-terminal catalytic cysteine residue. The DNA-protein cross-link is then reversed: able to catalyze the reversal of the thiazolidine cross-link and cycle between a cross-link and a non-cross-linked state depending on DNA context: mediates self-reversal of the thiazolidine cross-link in double stranded DNA. May act as a protease: mediates autocatalytic processing of its N-terminal methionine in order to expose the catalytic cysteine. The sequence is that of Abasic site processing protein YoqW (yoqW) from Bacillus subtilis (strain 168).